A 192-amino-acid polypeptide reads, in one-letter code: Adenylate kinase (192 aa).

10 to 18 (GVPGVGGTT) is an ATP binding site.

The protein belongs to the archaeal adenylate kinase family. Monomer.

The protein resides in the cytoplasm. It carries out the reaction AMP + ATP = 2 ADP. This chain is Adenylate kinase (adkA), found in Methanothermococcus thermolithotrophicus (Methanococcus thermolithotrophicus).